A 166-amino-acid polypeptide reads, in one-letter code: NADPH-dependent 7-cyano-7-deazaguanine reductase (166 aa).

C57 (thioimide intermediate) is an active-site residue. D64 serves as the catalytic Proton donor. Residues 79 to 81 (VES) and 98 to 99 (HE) each bind substrate.

The protein belongs to the GTP cyclohydrolase I family. QueF type 1 subfamily.

The protein localises to the cytoplasm. It catalyses the reaction 7-aminomethyl-7-carbaguanine + 2 NADP(+) = 7-cyano-7-deazaguanine + 2 NADPH + 3 H(+). The protein operates within tRNA modification; tRNA-queuosine biosynthesis. Its function is as follows. Catalyzes the NADPH-dependent reduction of 7-cyano-7-deazaguanine (preQ0) to 7-aminomethyl-7-deazaguanine (preQ1). The polypeptide is NADPH-dependent 7-cyano-7-deazaguanine reductase (Staphylococcus haemolyticus (strain JCSC1435)).